Reading from the N-terminus, the 210-residue chain is Large ribosomal subunit protein uL3 (210 aa).

This sequence belongs to the universal ribosomal protein uL3 family. Part of the 50S ribosomal subunit. Forms a cluster with proteins L14 and L19.

One of the primary rRNA binding proteins, it binds directly near the 3'-end of the 23S rRNA, where it nucleates assembly of the 50S subunit. This is Large ribosomal subunit protein uL3 from Pediococcus pentosaceus (strain ATCC 25745 / CCUG 21536 / LMG 10740 / 183-1w).